The sequence spans 177 residues: Large ribosomal subunit protein uL6 (177 aa).

Belongs to the universal ribosomal protein uL6 family. In terms of assembly, part of the 50S ribosomal subunit.

Its function is as follows. This protein binds to the 23S rRNA, and is important in its secondary structure. It is located near the subunit interface in the base of the L7/L12 stalk, and near the tRNA binding site of the peptidyltransferase center. The polypeptide is Large ribosomal subunit protein uL6 (Delftia acidovorans (strain DSM 14801 / SPH-1)).